A 170-amino-acid chain; its full sequence is Translocator protein 2 (170 aa).

A run of 5 helical transmembrane segments spans residues 3–23 (LQGA…WLFT), 45–65 (VLLL…YLVW), 78–98 (LPLG…VLFF), 104–124 (GLAL…ALIW), and 130–150 (LAAL…ALTY).

This sequence belongs to the TspO/BZRP family. As to quaternary structure, homotetramer. May also form homodimer. In terms of tissue distribution, expressed in erythrocytes (at protein level).

The protein localises to the endoplasmic reticulum membrane. Its subcellular location is the cell membrane. In terms of biological role, cholesterol-binding protein involved in the redistribution of cholesterol from lipid droplets to the endoplasmic reticulum. Required to meet cholesterol demands during erythropoietic differentiation. May play a role in transport processes at the plasma membrane of erythrocytes, including regulating VDAC-mediated ATP export, and import of the heme precursors protoporphyrin IX and 5-aminolevulinic acid. The protein is Translocator protein 2 (TSPO2) of Homo sapiens (Human).